Here is a 780-residue protein sequence, read N- to C-terminus: Ribosome biogenesis protein BOP1 homolog (780 aa).

Residues 1 to 11 (MTKKQAIKRKV) show a composition bias toward basic residues. A disordered region spans residues 1 to 155 (MTKKQAIKRK…DSDTSDEEDI (155 aa)). Over residues 17 to 26 (TNEQSSASEP) the composition is skewed to polar residues. Acidic residues-rich tracts occupy residues 44 to 53 (EDTTDDEGID), 60 to 72 (SSED…DEEG), 83 to 113 (AEGD…DAEE), and 145 to 154 (EDSDTSDEED). 7 WD repeats span residues 441-482 (GHTD…RTIE), 484-522 (NDVV…KLLI), 566-608 (THFK…SQIP), 611-649 (KSKG…LIKK), 652-691 (TNSK…KPYQ), 695-734 (LHRN…DLLQ), and 750-780 (RDEF…RLYT).

The protein belongs to the WD repeat BOP1/ERB1 family.

Its subcellular location is the nucleus. It localises to the nucleolus. The protein localises to the nucleoplasm. Functionally, required for maturation of ribosomal RNAs and formation of the large ribosomal subunit. This chain is Ribosome biogenesis protein BOP1 homolog, found in Drosophila virilis (Fruit fly).